Reading from the N-terminus, the 229-residue chain is Putative N-acetylmannosamine-6-phosphate 2-epimerase (229 aa).

Belongs to the NanE family.

The enzyme catalyses an N-acyl-D-glucosamine 6-phosphate = an N-acyl-D-mannosamine 6-phosphate. Its pathway is amino-sugar metabolism; N-acetylneuraminate degradation; D-fructose 6-phosphate from N-acetylneuraminate: step 3/5. Functionally, converts N-acetylmannosamine-6-phosphate (ManNAc-6-P) to N-acetylglucosamine-6-phosphate (GlcNAc-6-P). The chain is Putative N-acetylmannosamine-6-phosphate 2-epimerase from Escherichia fergusonii (strain ATCC 35469 / DSM 13698 / CCUG 18766 / IAM 14443 / JCM 21226 / LMG 7866 / NBRC 102419 / NCTC 12128 / CDC 0568-73).